The chain runs to 666 residues: DNA-directed RNA polymerase III subunit rpc3 (666 aa).

Disordered regions lie at residues 130 to 153 (HEPH…VHSY) and 375 to 455 (SRLD…TESR). Over residues 135–153 (NGNSNETNGATNGNGVHSY) the composition is skewed to polar residues. The interval 593-614 (TYKAMSRCLQRLDVEKRRKANI) is leucine-zipper.

Belongs to the RNA polymerase beta chain family. In terms of assembly, component of the RNA polymerase III (Pol III) complex consisting of 17 subunits.

It is found in the nucleus. Functionally, DNA-dependent RNA polymerase catalyzes the transcription of DNA into RNA using the four ribonucleoside triphosphates as substrates. Specific core component of RNA polymerase III which synthesizes small RNAs, such as 5S rRNA and tRNAs. This chain is DNA-directed RNA polymerase III subunit rpc3 (rpc82), found in Botryotinia fuckeliana (strain B05.10) (Noble rot fungus).